The chain runs to 233 residues: Zinc import ATP-binding protein ZnuC (233 aa).

The 217-residue stretch at 6–222 (IEFRNVSKKF…SEFSNALSAL (217 aa)) folds into the ABC transporter domain. 38 to 45 (GPNGAGKT) provides a ligand contact to ATP.

This sequence belongs to the ABC transporter superfamily. Zinc importer (TC 3.A.1.15.5) family. The complex is composed of two ATP-binding proteins (ZnuC), two transmembrane proteins (ZnuB) and a solute-binding protein (ZnuA).

The protein resides in the cell inner membrane. It catalyses the reaction Zn(2+)(out) + ATP(in) + H2O(in) = Zn(2+)(in) + ADP(in) + phosphate(in) + H(+)(in). Functionally, part of the ABC transporter complex ZnuABC involved in zinc import. Responsible for energy coupling to the transport system. This is Zinc import ATP-binding protein ZnuC from Rickettsia conorii (strain ATCC VR-613 / Malish 7).